The chain runs to 514 residues: Putative exoglucanase type C (514 aa).

Positions 1–17 are cleaved as a signal peptide; it reads MYRIVATASALIAAARA. The interval 18 to 439 is catalytic; the sequence is QQVCSLNTET…RDVPNSKVSF (422 aa). The active-site Nucleophile is Glu-229. The active-site Proton donor is the Glu-234. N-linked (GlcNAc...) asparagine glycosylation is present at Asn-287. Residues 408–424 show a composition bias toward polar residues; sequence STKVGSQRGSCATTSGK. Disordered regions lie at residues 408–433 and 448–485; these read STKVGSQRGSCATTSGKPSDLERDVP and GSTYKSDGTTPNPPASSSTTGSSTPTNPPAGSVDQWGQ. Positions 440–482 are linker; the sequence is SNIKFGPIGSTYKSDGTTPNPPASSSTTGSSTPTNPPAGSVDQ. The segment covering 462 to 479 has biased composition (low complexity); sequence ASSSTTGSSTPTNPPAGS. Residues 478 to 514 form the CBM1 domain; the sequence is GSVDQWGQCGGQNYSGPTTCKSPFTCKKINDFYSQCQ. Cystine bridges form between Cys-486–Cys-503 and Cys-497–Cys-513. Asn-490 carries an N-linked (GlcNAc...) asparagine glycan.

This sequence belongs to the glycosyl hydrolase 7 (cellulase C) family.

It catalyses the reaction Hydrolysis of (1-&gt;4)-beta-D-glucosidic linkages in cellulose and cellotetraose, releasing cellobiose from the non-reducing ends of the chains.. This chain is Putative exoglucanase type C, found in Fusarium oxysporum (Fusarium vascular wilt).